Reading from the N-terminus, the 142-residue chain is Large ribosomal subunit protein uL13 (142 aa).

The protein belongs to the universal ribosomal protein uL13 family. Part of the 50S ribosomal subunit.

Its function is as follows. This protein is one of the early assembly proteins of the 50S ribosomal subunit, although it is not seen to bind rRNA by itself. It is important during the early stages of 50S assembly. This chain is Large ribosomal subunit protein uL13, found in Burkholderia cenocepacia (strain ATCC BAA-245 / DSM 16553 / LMG 16656 / NCTC 13227 / J2315 / CF5610) (Burkholderia cepacia (strain J2315)).